The following is a 132-amino-acid chain: Large ribosomal subunit protein uL14 (132 aa).

The protein belongs to the universal ribosomal protein uL14 family. In terms of assembly, part of the 50S ribosomal subunit. Forms a cluster with proteins L3 and L24e, part of which may contact the 16S rRNA in 2 intersubunit bridges.

Functionally, binds to 23S rRNA. Forms part of two intersubunit bridges in the 70S ribosome. In Archaeoglobus fulgidus (strain ATCC 49558 / DSM 4304 / JCM 9628 / NBRC 100126 / VC-16), this protein is Large ribosomal subunit protein uL14.